The primary structure comprises 842 residues: ATP-binding cassette sub-family B member 6 (842 aa).

Over 1 to 26 the chain is Lumenal; the sequence is MVTVGNYCEAEGPVGPAWMQDGLSPC. The tract at residues 1–205 is required for the lysosomal targeting; the sequence is MVTVGNYCEA…SGGLFVLGLW (205 aa). Positions 1–236 are required for ATPase activity; the sequence is MVTVGNYCEA…RSQVRSAAQQ (236 aa). N-linked (GlcNAc...) asparagine glycosylation occurs at N6. A disulfide bridge links C8 with C26. A helical membrane pass occupies residues 27–47; sequence FFFTLVPSTRMALGTLALVLA. Residues 48–72 lie on the Cytoplasmic side of the membrane; the sequence is LPCRRRERPAGADSLSWGAGPRISP. The chain crosses the membrane as a helical span at residues 73–93; it reads YVLQLLLATLQAALPLAGLAG. Residues 94-106 are Lumenal-facing; the sequence is RVGTARGAPLPSY. Residues 107 to 127 form a helical membrane-spanning segment; the sequence is LLLASVLESLAGACGLWLLVV. Residues 128–147 lie on the Cytoplasmic side of the membrane; that stretch reads ERSQARQRLAMGIWIKFRHS. Residues 148–168 form a helical membrane-spanning segment; the sequence is PGLLLLWTVAFAAENLALVSW. Residues 169–185 lie on the Lumenal side of the membrane; that stretch reads NSPQWWWARADLGQQVQ. Residues 186 to 206 form a helical membrane-spanning segment; that stretch reads FSLWVLRYVVSGGLFVLGLWA. At 207 to 263 the chain is on the cytoplasmic side; the sequence is PGLRPQSYTLQVHEEDQDVERSQVRSAAQQSTWRDFGRKLRLLSGYLWPRGSPALQL. Residues 264–284 traverse the membrane as a helical segment; it reads VVLICLGLMGLERALNVLVPI. An ABC transmembrane type-1 domain is found at 265–556; it reads VLICLGLMGL…FGTYYRMIQT (292 aa). Over 285-291 the chain is Lumenal; that stretch reads FYRNIVN. Residues 292 to 312 form a helical membrane-spanning segment; sequence LLTEKAPWNSLAWTVTSYVFL. Residues 313 to 375 lie on the Cytoplasmic side of the membrane; it reads KFLQGGGTGS…TGEVLRIADR (63 aa). Residues 376–396 form a helical membrane-spanning segment; the sequence is GTSSVTGLLSYLVFNVIPTLA. Residue D397 is a topological domain, lumenal. A helical membrane pass occupies residues 398–418; it reads IIIGIIYFSMFFNAWFGLIVF. Over 419-499 the chain is Cytoplasmic; that stretch reads LCMSLYLTLT…SSASLVLLNQ (81 aa). Residues 500–520 traverse the membrane as a helical segment; that stretch reads TQNLVIGLGLLAGSLLCAYFV. At 521–529 the chain is on the lumenal side; it reads TEQKLQVGD. The chain crosses the membrane as a helical span at residues 530-550; that stretch reads YVLFGTYIIQLYMPLNWFGTY. Residues 551–842 lie on the Cytoplasmic side of the membrane; it reads YRMIQTNFID…EDTKPQTMER (292 aa). The region spanning 590–824 is the ABC transporter domain; the sequence is IEFENVHFSY…GGVYADMWQL (235 aa). Residues Y599 and 623 to 634 contribute to the ATP site; that span reads GPSGAGKSTILR.

This sequence belongs to the ABC transporter superfamily. ABCB family. Heavy Metal importer (TC 3.A.1.210) subfamily. As to quaternary structure, homodimer. In terms of processing, N-glycosylated. In terms of tissue distribution, widely expressed. High expression is detected in the retinal epithelium. Expressed in mature erythrocytes.

It localises to the cell membrane. The protein resides in the mitochondrion outer membrane. Its subcellular location is the endoplasmic reticulum membrane. The protein localises to the golgi apparatus membrane. It is found in the endosome membrane. It localises to the lysosome membrane. The protein resides in the late endosome membrane. Its subcellular location is the early endosome membrane. The protein localises to the secreted. It is found in the extracellular exosome. It localises to the mitochondrion. The protein resides in the endosome. Its subcellular location is the multivesicular body membrane. The protein localises to the melanosome membrane. It carries out the reaction heme b(in) + ATP + H2O = heme b(out) + ADP + phosphate + H(+). The catalysed reaction is coproporphyrin III(in) + ATP + H2O = coproporphyrin III(out) + ADP + phosphate + H(+). The enzyme catalyses pheophorbide a(in) + ATP + H2O = pheophorbide a(out) + ADP + phosphate + H(+). It catalyses the reaction coproporphyrinogen III(in) + ATP + H2O = coproporphyrinogen III(out) + ADP + phosphate + H(+). It carries out the reaction protoporphyrin IX(in) + ATP + H2O = protoporphyrin IX(out) + ADP + phosphate + H(+). The catalysed reaction is coproporphyrin I(in) + ATP + H2O = coproporphyrin I(out) + ADP + phosphate + H(+). The enzyme catalyses uroporphyrin I(in) + ATP + H2O = uroporphyrin I(out) + ADP + phosphate + H(+). It catalyses the reaction uroporphyrin III(in) + ATP + H2O = uroporphyrin III(out) + ADP + phosphate + H(+). Its activity is regulated as follows. ATPase activity is inhibited by MgATP with an IC(50) of 1.03 mM and up-regulated by coporphyrin III&gt; hemin &gt; protoporphyrin IX. ATPase activity for hemin is up-regulated by glutathione. The ATPase activity is impaired by increasing copper concentrations (0-300 uM). The ATPase activity is stimulated in presence of glutathione for increasing copper concentrations (0-300 uM). ATP-dependent transporter that catalyzes the transport of a broad-spectrum of porphyrins from the cytoplasm to the extracellular space through the plasma membrane or into the vesicle lumen. May also function as an ATP-dependent importer of porphyrins from the cytoplasm into the mitochondria, in turn may participate in the de novo heme biosynthesis regulation and in the coordination of heme and iron homeostasis during phenylhydrazine stress. May also play a key role in the early steps of melanogenesis producing PMEL amyloid fibrils. In vitro, it confers to cells a resistance to toxic metal such as arsenic and cadmium and against chemotherapeutics agent such as 5-fluorouracil, SN-38 and vincristin. In addition may play a role in the transition metal homeostasis. This chain is ATP-binding cassette sub-family B member 6, found in Homo sapiens (Human).